We begin with the raw amino-acid sequence, 453 residues long: GTPase Der (453 aa).

EngA-type G domains follow at residues 3–178 (PKIA…PNNE) and 190–363 (LKLA…LECS). GTP is bound by residues 9–16 (GRPNVGKS), 57–61 (DTGGV), 130–133 (NKVD), 196–203 (GRPNAGKS), 243–247 (DTAGI), and 308–311 (NKTD). One can recognise a KH-like domain in the interval 364–448 (TRINTGVLNR…PIRIRLRSSH (85 aa)).

Belongs to the TRAFAC class TrmE-Era-EngA-EngB-Septin-like GTPase superfamily. EngA (Der) GTPase family. As to quaternary structure, associates with the 50S ribosomal subunit.

Functionally, GTPase that plays an essential role in the late steps of ribosome biogenesis. This is GTPase Der from Lawsonia intracellularis (strain PHE/MN1-00).